Consider the following 365-residue polypeptide: Endophilin-B1 (365 aa).

Met1 is subject to N-acetylmethionine. The tract at residues Met1–Leu30 is membrane-binding amphipathic helix. Residues Met1–Glu37 form a required for membrane binding region. Residues Glu27–Ser261 form the BAR domain. At Thr145 the chain carries Phosphothreonine; by CDK5. Positions Tyr155–Leu195 form a coiled coil. An SH3 domain is found at Gly305–Asn365.

Belongs to the endophilin family. Homodimer, and heterodimer with SH3GLB2. Binds BAX; induction of apoptosis augments BAX binding. Binds DNM1, HTT, AMPH, BIN1 and ARFGAP1. Interacts with UVRAG; UVRAG bridges the interaction to BECN1 indicative for an association with the PI3K complex II (PI3KC3-C2). Phosphorylated at Thr-145 by CDK5; this phosphorylation is required for autophagy induction in starved neurons and facilitates homodimerization.

It is found in the cytoplasm. The protein localises to the golgi apparatus membrane. Its subcellular location is the mitochondrion outer membrane. The protein resides in the cytoplasmic vesicle. It localises to the autophagosome membrane. It is found in the midbody. May be required for normal outer mitochondrial membrane dynamics. Required for coatomer-mediated retrograde transport in certain cells. May recruit other proteins to membranes with high curvature. May promote membrane fusion. Involved in activation of caspase-dependent apoptosis by promoting BAX/BAK1 activation. Involved in caspase-independent apoptosis during nutrition starvation and involved in the regulation of autophagy. Activates lipid kinase activity of PIK3C3 during autophagy probably by associating with the PI3K complex II (PI3KC3-C2). Associated with PI3KC3-C2 during autophagy may regulate the trafficking of ATG9A from the Golgi complex to the peripheral cytoplasm for the formation of autophagosomes by inducing Golgi membrane tubulation and fragmentation. Involved in regulation of degradative endocytic trafficking and cytokinesis, probably in the context of PI3KC3-C2. This Bos taurus (Bovine) protein is Endophilin-B1 (SH3GLB1).